A 285-amino-acid chain; its full sequence is Heme oxygenase 3, chloroplastic (285 aa).

Residues 1–58 (MATTRLNPSCHFPASTRLSCESYLGLRTTGRISYARTLTAPRGYLAVKANGGQASVVT) constitute a chloroplast transit peptide. Position 89 (H89) interacts with heme b. Positions 89–105 (HTKDQAREGEKESRSPE) are enriched in basic and acidic residues. Positions 89–109 (HTKDQAREGEKESRSPEEGPV) are disordered.

It belongs to the heme oxygenase family. Widely expressed at low levels.

The protein resides in the plastid. Its subcellular location is the chloroplast. The enzyme catalyses heme b + 3 reduced [NADPH--hemoprotein reductase] + 3 O2 = biliverdin IXalpha + CO + Fe(2+) + 3 oxidized [NADPH--hemoprotein reductase] + 3 H2O + H(+). Catalyzes the opening of the heme ring to form the open-chain tetrapyrrole biliverdin IX with the release of iron and carbon monoxide (CO). Produces specifically the biliverdin IX-alpha isomer. Plays a minor role in phytochrome assembly and photomorphogenesis. The protein is Heme oxygenase 3, chloroplastic (HO3) of Arabidopsis thaliana (Mouse-ear cress).